The sequence spans 660 residues: Bifunctional polymyxin resistance protein ArnA (660 aa).

Residues 1–304 form a formyltransferase ArnAFT region; the sequence is MKTVVFAYHD…TLGLVQGSRL (304 aa). 86-88 contacts (6R)-10-formyltetrahydrofolate; sequence HLI. Catalysis depends on His104, which acts as the Proton donor; for formyltransferase activity. Residues Arg114 and 136–140 contribute to the (6R)-10-formyltetrahydrofolate site; that span reads VKRAD. Positions 314–660 are dehydrogenase ArnADH; the sequence is RRTRVLILGV…RTVDLTDKPL (347 aa). NAD(+) contacts are provided by residues Asp347 and 368–369; that span reads DI. Residues Ala393, Tyr398, and 432-433 contribute to the UDP-alpha-D-glucuronate site; that span reads TS. Residue Glu434 is the Proton acceptor; for decarboxylase activity of the active site. Residues Arg460, Asn492, 526–535, and Tyr613 each bind UDP-alpha-D-glucuronate; that span reads KLIDGGKQKR. The active-site Proton donor; for decarboxylase activity is the Arg619.

It in the N-terminal section; belongs to the Fmt family. UDP-L-Ara4N formyltransferase subfamily. This sequence in the C-terminal section; belongs to the NAD(P)-dependent epimerase/dehydratase family. UDP-glucuronic acid decarboxylase subfamily. Homohexamer, formed by a dimer of trimers.

The enzyme catalyses UDP-alpha-D-glucuronate + NAD(+) = UDP-beta-L-threo-pentopyranos-4-ulose + CO2 + NADH. It carries out the reaction UDP-4-amino-4-deoxy-beta-L-arabinose + (6R)-10-formyltetrahydrofolate = UDP-4-deoxy-4-formamido-beta-L-arabinose + (6S)-5,6,7,8-tetrahydrofolate + H(+). It participates in nucleotide-sugar biosynthesis; UDP-4-deoxy-4-formamido-beta-L-arabinose biosynthesis; UDP-4-deoxy-4-formamido-beta-L-arabinose from UDP-alpha-D-glucuronate: step 1/3. It functions in the pathway nucleotide-sugar biosynthesis; UDP-4-deoxy-4-formamido-beta-L-arabinose biosynthesis; UDP-4-deoxy-4-formamido-beta-L-arabinose from UDP-alpha-D-glucuronate: step 3/3. The protein operates within bacterial outer membrane biogenesis; lipopolysaccharide biosynthesis. Bifunctional enzyme that catalyzes the oxidative decarboxylation of UDP-glucuronic acid (UDP-GlcUA) to UDP-4-keto-arabinose (UDP-Ara4O) and the addition of a formyl group to UDP-4-amino-4-deoxy-L-arabinose (UDP-L-Ara4N) to form UDP-L-4-formamido-arabinose (UDP-L-Ara4FN). The modified arabinose is attached to lipid A and is required for resistance to polymyxin and cationic antimicrobial peptides. The chain is Bifunctional polymyxin resistance protein ArnA from Escherichia coli O6:K15:H31 (strain 536 / UPEC).